We begin with the raw amino-acid sequence, 331 residues long: Biotin synthase (331 aa).

One can recognise a Radical SAM core domain in the interval 39–264; that stretch reads SELQTCYLVS…VFPQSMVRLA (226 aa). [4Fe-4S] cluster is bound by residues Cys-54, Cys-58, and Cys-61. The [2Fe-2S] cluster site is built by Cys-98, Cys-130, Cys-190, and Arg-262.

Belongs to the radical SAM superfamily. Biotin synthase family. As to quaternary structure, homodimer. It depends on [4Fe-4S] cluster as a cofactor. [2Fe-2S] cluster is required as a cofactor.

The catalysed reaction is (4R,5S)-dethiobiotin + (sulfur carrier)-SH + 2 reduced [2Fe-2S]-[ferredoxin] + 2 S-adenosyl-L-methionine = (sulfur carrier)-H + biotin + 2 5'-deoxyadenosine + 2 L-methionine + 2 oxidized [2Fe-2S]-[ferredoxin]. The protein operates within cofactor biosynthesis; biotin biosynthesis; biotin from 7,8-diaminononanoate: step 2/2. Its function is as follows. Catalyzes the conversion of dethiobiotin (DTB) to biotin by the insertion of a sulfur atom into dethiobiotin via a radical-based mechanism. This chain is Biotin synthase, found in Chlamydia abortus (strain DSM 27085 / S26/3) (Chlamydophila abortus).